The sequence spans 345 residues: MGVCGSLFQPWKCLVVVSLRLLFLVPTGVPVRSGDATFPKAMDNVTVRQGESATLRCTIDDRVTRVAWLNRSTILYAGNDKWSIDPRVIILVNTPTQYSIMIQNVDVYDEGPYTCSVQTDNHPKTSRVHLIVQVPPQIMNISSDVTVNEGSSVTLLCLAIGRPEPTVTWRHLSVKEGQGFVSEDEYLEISDIKRDQSGEYECSALNDVAAPDVRKVKITVNYPPYISKAKNTGVSVGQKGILSCEASAVPMAEFQWFKEDTRLATGLDGMRIENKGHISTLTFFNVSEKDYGNYTCVATNKLGITNASITLYGPGAVIDGVNSASRALACLWLSGTLFAHFFIKF.

The signal sequence occupies residues 1–27 (MGVCGSLFQPWKCLVVVSLRLLFLVPT). Ig-like C2-type domains follow at residues 39 to 126 (PKAM…PKTS), 136 to 219 (PQIM…VKIT), and 223 to 310 (PPYI…ASIT). Residues Asn-44, Asn-70, and Asn-140 are each glycosylated (N-linked (GlcNAc...) asparagine). Residues Cys-57 and Cys-115 are joined by a disulfide bond. Intrachain disulfides connect Cys-157–Cys-202 and Cys-244–Cys-296. 3 N-linked (GlcNAc...) asparagine glycosylation sites follow: Asn-285, Asn-293, and Asn-306. Asn-322 is lipidated: GPI-anchor amidated asparagine. The propeptide at 323–345 (SASRALACLWLSGTLFAHFFIKF) is removed in mature form.

It belongs to the immunoglobulin superfamily. IgLON family.

The protein localises to the cell membrane. In terms of biological role, binds opioids in the presence of acidic lipids; probably involved in cell contact. This is Opioid-binding protein/cell adhesion molecule (OPCML) from Bos taurus (Bovine).